A 386-amino-acid chain; its full sequence is Ethanolamine kinase 2 (386 aa).

It belongs to the choline/ethanolamine kinase family. As to expression, expressed in kidney, liver, ovary, testis and prostate.

It carries out the reaction ethanolamine + ATP = phosphoethanolamine + ADP + H(+). The protein operates within phospholipid metabolism; phosphatidylethanolamine biosynthesis; phosphatidylethanolamine from ethanolamine: step 1/3. Functionally, highly specific for ethanolamine phosphorylation. Does not have choline kinase activity. This is Ethanolamine kinase 2 (ETNK2) from Homo sapiens (Human).